We begin with the raw amino-acid sequence, 101 residues long: Small ribosomal subunit protein uS14 (101 aa).

It belongs to the universal ribosomal protein uS14 family. As to quaternary structure, part of the 30S ribosomal subunit. Contacts proteins S3 and S10.

Binds 16S rRNA, required for the assembly of 30S particles and may also be responsible for determining the conformation of the 16S rRNA at the A site. The polypeptide is Small ribosomal subunit protein uS14 (Polaromonas naphthalenivorans (strain CJ2)).